A 244-amino-acid polypeptide reads, in one-letter code: MFKRIAIAQIRTYTNGVVFKTASKPKRRWIPWTIFGGSFLGGWYLTQHMTFTDLLAYWRYDALPKNADEVVKYHADLNRRLNGLPIVKQLENAGFVQVIANEEENLLVSRALNTPGGVAIPPRVYYNPSRRETVGLYHLGMKLTGYPFLIHGGILATVIEDLMKEAIRLEKGTKNINQETKNLSISYKFPTLANQFVVVRTTDLQQYGNKTKLKAELMDQSGNRTLVKANATFSSEQGNPKEEK.

The next 2 membrane-spanning stretches (helical) occupy residues 29–49 (WIPWTIFGGSFLGGWYLTQHM) and 139–159 (LGMKLTGYPFLIHGGILATVI).

The protein belongs to the FMP10 family.

It is found in the mitochondrion membrane. This is an uncharacterized protein from Saccharomyces cerevisiae (strain ATCC 204508 / S288c) (Baker's yeast).